Here is a 317-residue protein sequence, read N- to C-terminus: Flagellar hook-associated protein 3 (317 aa).

The protein belongs to the bacterial flagellin family.

The protein localises to the secreted. It is found in the bacterial flagellum. The chain is Flagellar hook-associated protein 3 (flgL) from Escherichia coli (strain K12).